Here is a 347-residue protein sequence, read N- to C-terminus: UPF0284 protein M1425_0030 (347 aa).

The protein belongs to the UPF0284 family.

The polypeptide is UPF0284 protein M1425_0030 (Saccharolobus islandicus (strain M.14.25 / Kamchatka #1) (Sulfolobus islandicus)).